Here is a 330-residue protein sequence, read N- to C-terminus: 2-oxoisovalerate dehydrogenase subunit alpha (330 aa).

Substrate contacts are provided by residues Phe44, Tyr73, 107–110 (MPGH), and Ser123. 72 to 74 (YYR) serves as a coordination point for thiamine diphosphate. Residues 123–125 (SPV), 153–159 (GEGSSNQ), 183–187 (NKYAI), and His252 each bind thiamine diphosphate. Residues Glu154, Asn183, and Tyr185 each coordinate Mg(2+). The tract at residues 249–272 (LTPHSSDDDDSSYRGREEVEEAKK) is disordered. The segment covering 259–272 (SSYRGREEVEEAKK) has biased composition (basic and acidic residues).

Belongs to the BCKDHA family. Heterotetramer of two alpha and two beta chains. Directly associated with ODBB in the E1 complex. Thiamine diphosphate serves as cofactor.

It carries out the reaction N(6)-[(R)-lipoyl]-L-lysyl-[protein] + 3-methyl-2-oxobutanoate + H(+) = N(6)-[(R)-S(8)-2-methylpropanoyldihydrolipoyl]-L-lysyl-[protein] + CO2. Its function is as follows. The branched-chain alpha-keto dehydrogenase complex catalyzes the overall conversion of alpha-keto acids to acyl-CoA and CO(2). It contains multiple copies of three enzymatic components: branched-chain alpha-keto acid decarboxylase (E1), lipoamide acyltransferase (E2) and lipoamide dehydrogenase (E3). The polypeptide is 2-oxoisovalerate dehydrogenase subunit alpha (bfmBAA) (Bacillus subtilis (strain 168)).